Here is a 142-residue protein sequence, read N- to C-terminus: SsrA-binding protein (142 aa).

This sequence belongs to the SmpB family.

Its subcellular location is the cytoplasm. In terms of biological role, required for rescue of stalled ribosomes mediated by trans-translation. Binds to transfer-messenger RNA (tmRNA), required for stable association of tmRNA with ribosomes. tmRNA and SmpB together mimic tRNA shape, replacing the anticodon stem-loop with SmpB. tmRNA is encoded by the ssrA gene; the 2 termini fold to resemble tRNA(Ala) and it encodes a 'tag peptide', a short internal open reading frame. During trans-translation Ala-aminoacylated tmRNA acts like a tRNA, entering the A-site of stalled ribosomes, displacing the stalled mRNA. The ribosome then switches to translate the ORF on the tmRNA; the nascent peptide is terminated with the 'tag peptide' encoded by the tmRNA and targeted for degradation. The ribosome is freed to recommence translation, which seems to be the essential function of trans-translation. The protein is SsrA-binding protein of Mycoplasma mobile (strain ATCC 43663 / 163K / NCTC 11711) (Mesomycoplasma mobile).